The sequence spans 302 residues: Aspartate carbamoyltransferase catalytic subunit (302 aa).

Residues arginine 53 and threonine 54 each contribute to the carbamoyl phosphate site. Lysine 82 contributes to the L-aspartate binding site. Carbamoyl phosphate-binding residues include arginine 103, histidine 131, and glutamine 134. Residues arginine 164 and arginine 223 each coordinate L-aspartate. Carbamoyl phosphate-binding residues include leucine 260 and proline 261.

It belongs to the aspartate/ornithine carbamoyltransferase superfamily. ATCase family. As to quaternary structure, heterooligomer of catalytic and regulatory chains.

The enzyme catalyses carbamoyl phosphate + L-aspartate = N-carbamoyl-L-aspartate + phosphate + H(+). The protein operates within pyrimidine metabolism; UMP biosynthesis via de novo pathway; (S)-dihydroorotate from bicarbonate: step 2/3. In terms of biological role, catalyzes the condensation of carbamoyl phosphate and aspartate to form carbamoyl aspartate and inorganic phosphate, the committed step in the de novo pyrimidine nucleotide biosynthesis pathway. The chain is Aspartate carbamoyltransferase catalytic subunit from Methanococcus maripaludis (strain C6 / ATCC BAA-1332).